The primary structure comprises 1138 residues: MDLFHTPAGALDKLVAHNLHPAPEFTAAVRGALGSLNITLQQHRARGSQRPRVIRIAKGGAYARGTALRGGTDVELVIFLDCFQSFGDQKTCHSETLGAMRMLLESWGGHPGPGLTFEFSQSKASRILQFRLASADGEHWIDVSLVPAFDVLGQPRSGVKPTPNVYSSLLSSHCQAGEYSACFTEPRKNFVNTRPAKLKNLILLVKHWYHQVQTRAVRATLPPSYALELLTIFAWEQGCGKDSFSLAQGLRTVLALIQHSKYLCIFWTENYGFEDPAVGEFLRRQLKRPRPVILDPADPTWDVGNGTAWRWDVLAQEAESSFSQQCFKQASGVLVQPWEGPGLPRAGILDLGHPIYQGPNQALEDNKGHLAVQSKERSQKPSNSAPGFPEAATKIPAMPNPSANKTRKIRKKAAHPKTVQEAALDSISSHVRITQSTASSHMPPDRSSISTAGSRMSPDLSQIPSKDLDCFIQDHLRPSPQFQQQVKQAIDAILCCLREKSVYKVLRVSKGGSFGRGTDLRGSCDVELVIFYKTLGDFKGQKPHQAEILRDMQAQLRHWCQNPVPGLSLQFIEQKPNALQLQLASTDLSNRVDLSVLPAFDAVGPLKSGTKPQPQVYSSLLSSGCQAGEHAACFAELRRNFINTCPPKLKSLMLLVKHWYRQVVTRYKGGEAAGDAPPPAYALELLTIFAWEQGCGEQKFSLAEGLRTILRLIQQHQSLCIYWTVNYSVQDPAIRAHLLCQLRKARPLVLDPADPTWNVGQGDWKLLAQEAAALGSQVCLQSGDGTLVPPWDVTPALLHQTLAEDLDKFISEFLQPNRHFLTQVKRAVDTICSFLKENCFRNSTIKVLKVVKGGSSAKGTALQGRSDADLVVFLSCFRQFSEQGSHRAEIISEIQAHLEACQQMHSFDVKFEVSKRKNPRVLSFTLTSQTLLDQSVDFDVLPAFDALGQLRSGSRPDPRVYTDLIHSCSNAGEFSTCFTELQRDFITSRPTKLKSLIRLVKYWYQQCNKTIKGKGSLPPQHGLELLTVYAWEQGGQNPQFNMAEGFRTVLELIVQYRQLCVYWTINYSAEDKTIGDFLKMQLRKPRPVILDPADPTGNLGHNARWDLLAKEATVYASALCCVDRDGNPIKPWPVKAAV.

Met-1 is modified (N-acetylmethionine). An OAS domain 1 region spans residues Thr-6–Pro-341. Interaction with dsRNA stretches follow at residues Asp-12–Ile-56 and Glu-185–Lys-199. Positions Gly-342–Gln-462 are linker. A compositionally biased stretch (basic and acidic residues) spans Leu-370 to Gln-379. Disordered regions lie at residues Leu-370 to Ala-403 and Thr-434 to Asp-459. Residues Ser-447–Asp-459 show a composition bias toward polar residues. OAS domain regions lie at residues Ile-463–Val-793 and Thr-801–Lys-1135. Ser-855 is an ATP binding site. 3 residues coordinate Mg(2+): Asp-867, Asp-869, and Asp-939. ATP-binding residues include Arg-998, Lys-1001, and Gln-1020.

This sequence belongs to the 2-5A synthase family. Monomer. The cofactor is Mg(2+). As to expression, intestine.

Its subcellular location is the cytoplasm. It is found in the nucleus. It carries out the reaction 3 ATP = 5'-triphosphoadenylyl-(2'-&gt;5')-adenylyl-(2'-&gt;5')-adenosine + 2 diphosphate. Produced as a latent enzyme which is activated by dsRNA generated during the course of viral infection. Strongly activated by long dsRNAs at least 50 nucleotides in length. ssRNA does not activate the enzyme. Interferon-induced, dsRNA-activated antiviral enzyme which plays a critical role in cellular innate antiviral response. In addition, it may also play a role in other cellular processes such as apoptosis, cell growth, differentiation and gene regulation. Synthesizes preferentially dimers of 2'-5'-oligoadenylates (2-5A) from ATP which then bind to the inactive monomeric form of ribonuclease L (RNase L) leading to its dimerization and subsequent activation. Activation of RNase L leads to degradation of cellular as well as viral RNA, resulting in the inhibition of protein synthesis, thus terminating viral replication. Can mediate the antiviral effect via the classical RNase L-dependent pathway or an alternative antiviral pathway independent of RNase L. The chain is 2'-5'-oligoadenylate synthase 3 (Oas3) from Mus musculus (Mouse).